Here is a 383-residue protein sequence, read N- to C-terminus: Acetylornithine deacetylase (383 aa).

Residue histidine 80 coordinates Zn(2+). The active site involves aspartate 82. Zn(2+) is bound at residue aspartate 112. Residue glutamate 144 is part of the active site. Positions 145, 169, and 355 each coordinate Zn(2+).

This sequence belongs to the peptidase M20A family. ArgE subfamily. In terms of assembly, homodimer. Requires Zn(2+) as cofactor. Co(2+) is required as a cofactor. It depends on glutathione as a cofactor.

Its subcellular location is the cytoplasm. It carries out the reaction N(2)-acetyl-L-ornithine + H2O = L-ornithine + acetate. The protein operates within amino-acid biosynthesis; L-arginine biosynthesis; L-ornithine from N(2)-acetyl-L-ornithine (linear): step 1/1. Functionally, catalyzes the hydrolysis of the amide bond of N(2)-acetylated L-amino acids. Cleaves the acetyl group from N-acetyl-L-ornithine to form L-ornithine, an intermediate in L-arginine biosynthesis pathway, and a branchpoint in the synthesis of polyamines. This Salmonella paratyphi A (strain ATCC 9150 / SARB42) protein is Acetylornithine deacetylase.